A 391-amino-acid chain; its full sequence is Thioredoxin-interacting protein (391 aa).

A Glycyl lysine isopeptide (Lys-Gly) (interchain with G-Cter in ubiquitin) cross-link involves residue lysine 212. Serine 361 is subject to Phosphoserine.

The protein belongs to the arrestin family. In terms of assembly, homodimer; disulfide-linked. Interacts with TXN/thioredoxin through its redox-active site. Interacts with transcriptional repressors ZBTB16, ZBTB32 and HDAC1. Interacts with DDIT4. Post-translationally, ubiquitinated; undergoes heterotypic 'Lys-48'-/'Lys-63'-branched polyubiquitination catalyzed by ITCH and UBR5 resulting in proteasomal degradation. Deubiquitinated by USP5, leading to TXNIP stabilization.

It is found in the cytoplasm. Functionally, may act as an oxidative stress mediator by inhibiting thioredoxin activity or by limiting its bioavailability. Interacts with COPS5 and restores COPS5-induced suppression of CDKN1B stability, blocking the COPS5-mediated translocation of CDKN1B from the nucleus to the cytoplasm. Functions as a transcriptional repressor, possibly by acting as a bridge molecule between transcription factors and corepressor complexes, and over-expression will induce G0/G1 cell cycle arrest. Required for the maturation of natural killer cells. Acts as a suppressor of tumor cell growth. Inhibits the proteasomal degradation of DDIT4, and thereby contributes to the inhibition of the mammalian target of rapamycin complex 1 (mTORC1). The protein is Thioredoxin-interacting protein (TXNIP) of Pongo abelii (Sumatran orangutan).